A 990-amino-acid chain; its full sequence is Transposase for transposon Tn3926 (990 aa).

The interval 673–698 (GDGTTSSSDGQNFRTGSKAESTGHIN) is disordered. Positions 674–696 (DGTTSSSDGQNFRTGSKAESTGH) are enriched in polar residues.

This sequence belongs to the transposase 7 family.

Its function is as follows. Required for transposition of transposon Tn3926. In Escherichia coli, this protein is Transposase for transposon Tn3926 (tnpA).